The sequence spans 434 residues: CinA-like protein (434 aa).

Belongs to the CinA family.

In Mycolicibacterium paratuberculosis (strain ATCC BAA-968 / K-10) (Mycobacterium paratuberculosis), this protein is CinA-like protein.